The following is a 364-amino-acid chain: 3-dehydroquinate synthase (364 aa).

Residues aspartate 75–lysine 80, glycine 109–aspartate 113, threonine 133–threonine 134, lysine 146, lysine 155, and threonine 173–threonine 176 contribute to the NAD(+) site. Zn(2+) is bound by residues glutamate 188, histidine 251, and histidine 268.

This sequence belongs to the sugar phosphate cyclases superfamily. Dehydroquinate synthase family. It depends on Co(2+) as a cofactor. Requires Zn(2+) as cofactor. NAD(+) serves as cofactor.

The protein localises to the cytoplasm. The enzyme catalyses 7-phospho-2-dehydro-3-deoxy-D-arabino-heptonate = 3-dehydroquinate + phosphate. It participates in metabolic intermediate biosynthesis; chorismate biosynthesis; chorismate from D-erythrose 4-phosphate and phosphoenolpyruvate: step 2/7. Functionally, catalyzes the conversion of 3-deoxy-D-arabino-heptulosonate 7-phosphate (DAHP) to dehydroquinate (DHQ). The sequence is that of 3-dehydroquinate synthase from Dechloromonas aromatica (strain RCB).